We begin with the raw amino-acid sequence, 922 residues long: Golgi-associated RAB2 interactor protein 5B (922 aa).

Disordered regions lie at residues 244–264 (DVRK…DRTH), 292–317 (QSSP…SPSH), 373–404 (TPYS…KAPS), 424–597 (AVPA…TQET), 758–830 (QPES…LRPS), and 842–869 (ATAR…LATV). Over residues 292 to 305 (QSSPKACTSASDEA) the composition is skewed to polar residues. Over residues 431-441 (KPPPGLAPPQK) the composition is skewed to pro residues. Low complexity-rich tracts occupy residues 442 to 458 (APAA…VPAP) and 471 to 495 (KAPA…ASAV). Residues 496-507 (PAPPQKTPPPSQ) show a composition bias toward pro residues. Positions 758-788 (QPESHTWVKEGKRPWGEMKEQPWGEMKEPPW) are enriched in basic and acidic residues.

Belongs to the GARIN family.

The polypeptide is Golgi-associated RAB2 interactor protein 5B (Homo sapiens (Human)).